The sequence spans 338 residues: uncharacterized protein (338 aa).

The signal sequence occupies residues 1-29 (MIKQLYKNITICSLTISTALTVFPATSYA).

This sequence belongs to the aerolysin family.

This is an uncharacterized protein from Staphylococcus aureus (strain bovine RF122 / ET3-1).